A 392-amino-acid chain; its full sequence is Putative F-box protein At1g71320 (392 aa).

The region spanning 8 to 55 (NPKTIFIPDDIAEGIFHHLPIKSLARFKVLSKKWTSMIESTYFSHKRL) is the F-box domain.

This chain is Putative F-box protein At1g71320, found in Arabidopsis thaliana (Mouse-ear cress).